Here is a 141-residue protein sequence, read N- to C-terminus: Hemoglobin subunit alpha-1 (141 aa).

The Globin domain occupies 1-141 (VLSAADKGNV…VSTVLTSKYR (141 aa)). O2 is bound at residue H58. Position 87 (H87) interacts with heme b.

The protein belongs to the globin family. Heterotetramer of two alpha chains and two beta chains. Red blood cells.

Its function is as follows. Involved in oxygen transport from the lung to the various peripheral tissues. In Bos mutus grunniens (Wild yak), this protein is Hemoglobin subunit alpha-1.